The following is a 277-amino-acid chain: Large ribosomal subunit protein uL2 (277 aa).

Residues 219 to 277 (RPQTRGSAMNPVDHPHGGGEGKKNSGRHPVTPWGKPTKGAKTRRKKASDKLIISRRKGK) are disordered. Positions 231–241 (DHPHGGGEGKK) are enriched in basic and acidic residues. Over residues 256–277 (KGAKTRRKKASDKLIISRRKGK) the composition is skewed to basic residues.

This sequence belongs to the universal ribosomal protein uL2 family. In terms of assembly, part of the 50S ribosomal subunit. Forms a bridge to the 30S subunit in the 70S ribosome.

In terms of biological role, one of the primary rRNA binding proteins. Required for association of the 30S and 50S subunits to form the 70S ribosome, for tRNA binding and peptide bond formation. It has been suggested to have peptidyltransferase activity; this is somewhat controversial. Makes several contacts with the 16S rRNA in the 70S ribosome. The sequence is that of Large ribosomal subunit protein uL2 from Campylobacter concisus (strain 13826).